Reading from the N-terminus, the 78-residue chain is Large ribosomal subunit protein bL28 (78 aa).

The tract at residues 1–21 (MSRVCQVTGKKPMVGNNRSHA) is disordered.

This sequence belongs to the bacterial ribosomal protein bL28 family.

The polypeptide is Large ribosomal subunit protein bL28 (Shewanella loihica (strain ATCC BAA-1088 / PV-4)).